Reading from the N-terminus, the 734-residue chain is Polyphosphate kinase (734 aa).

Asn-67 contributes to the ATP binding site. Residues Arg-392 and Arg-422 each contribute to the Mg(2+) site. In terms of domain architecture, PLD phosphodiesterase spans 447–481 (THLKTHSKIALVVKRINNELTSFVHLGTGNYNDKT). His-452 (phosphohistidine intermediate) is an active-site residue. ATP-binding residues include Tyr-485, Arg-581, and His-609. The segment at 705–734 (KKQSVQPSGQPVHSRRGGSWMRKLKNTFKR) is disordered.

The protein belongs to the polyphosphate kinase 1 (PPK1) family. It depends on Mg(2+) as a cofactor. In terms of processing, an intermediate of this reaction is the autophosphorylated ppk in which a phosphate is covalently linked to a histidine residue through a N-P bond.

The catalysed reaction is [phosphate](n) + ATP = [phosphate](n+1) + ADP. In terms of biological role, catalyzes the reversible transfer of the terminal phosphate of ATP to form a long-chain polyphosphate (polyP). The protein is Polyphosphate kinase of Staphylococcus epidermidis (strain ATCC 12228 / FDA PCI 1200).